Reading from the N-terminus, the 61-residue chain is Ubiquinol-cytochrome c reductase complex assembly factor 6 (61 aa).

The Mitochondrial matrix portion of the chain corresponds to 1-9 (MPAGVSWGQ). A helical transmembrane segment spans residues 10–32 (YLKFLGCALASMMAGSQAVHLYY). Residues 33 to 61 (KPLEDLRVYIEQEQHSTQVDPTAKPPESA) are Mitochondrial intermembrane-facing.

The protein belongs to the UQCC6 family. In terms of assembly, interacts with sloth1; the interaction stabilizes both components. Expressed in the brain.

It is found in the mitochondrion inner membrane. The protein localises to the mitochondrion. Functionally, required for the assembly and stability of the mitochondrial ubiquinol-cytochrome c reductase complex (complex III (CIII) or cytochrome b-c1 complex), a multisubunit transmembrane complex that is part of the mitochondrial electron transport chain (ETC) which drives oxidative phosphorylation. The polypeptide is Ubiquinol-cytochrome c reductase complex assembly factor 6 (Drosophila melanogaster (Fruit fly)).